Reading from the N-terminus, the 196-residue chain is Probable malonic semialdehyde reductase RutE (196 aa).

The protein belongs to the nitroreductase family. HadB/RutE subfamily. FMN serves as cofactor.

It catalyses the reaction 3-hydroxypropanoate + NADP(+) = 3-oxopropanoate + NADPH + H(+). May reduce toxic product malonic semialdehyde to 3-hydroxypropionic acid, which is excreted. This Escherichia coli O157:H7 protein is Probable malonic semialdehyde reductase RutE.